Consider the following 461-residue polypeptide: Siroheme synthase (461 aa).

Residues Met1 to Ile204 form a precorrin-2 dehydrogenase /sirohydrochlorin ferrochelatase region. NAD(+)-binding positions include Ile22–Val23 and Lys43–Thr44. A Phosphoserine modification is found at Ser128. The interval Gly218–Gly461 is uroporphyrinogen-III C-methyltransferase. S-adenosyl-L-methionine is bound at residue Pro227. Asp250 (proton acceptor) is an active-site residue. The active-site Proton donor is Lys272. Residues Gly303 to Asp305, Ile308, Met386, and Gly415 each bind S-adenosyl-L-methionine.

This sequence in the N-terminal section; belongs to the precorrin-2 dehydrogenase / sirohydrochlorin ferrochelatase family. It in the C-terminal section; belongs to the precorrin methyltransferase family.

The catalysed reaction is uroporphyrinogen III + 2 S-adenosyl-L-methionine = precorrin-2 + 2 S-adenosyl-L-homocysteine + H(+). It catalyses the reaction precorrin-2 + NAD(+) = sirohydrochlorin + NADH + 2 H(+). It carries out the reaction siroheme + 2 H(+) = sirohydrochlorin + Fe(2+). Its pathway is cofactor biosynthesis; adenosylcobalamin biosynthesis; precorrin-2 from uroporphyrinogen III: step 1/1. The protein operates within cofactor biosynthesis; adenosylcobalamin biosynthesis; sirohydrochlorin from precorrin-2: step 1/1. It participates in porphyrin-containing compound metabolism; siroheme biosynthesis; precorrin-2 from uroporphyrinogen III: step 1/1. It functions in the pathway porphyrin-containing compound metabolism; siroheme biosynthesis; siroheme from sirohydrochlorin: step 1/1. Its pathway is porphyrin-containing compound metabolism; siroheme biosynthesis; sirohydrochlorin from precorrin-2: step 1/1. Functionally, multifunctional enzyme that catalyzes the SAM-dependent methylations of uroporphyrinogen III at position C-2 and C-7 to form precorrin-2 via precorrin-1. Then it catalyzes the NAD-dependent ring dehydrogenation of precorrin-2 to yield sirohydrochlorin. Finally, it catalyzes the ferrochelation of sirohydrochlorin to yield siroheme. The polypeptide is Siroheme synthase (Blochmanniella floridana).